We begin with the raw amino-acid sequence, 363 residues long: Flagellar P-ring protein 2 (363 aa).

Residues 1–18 form the signal peptide; it reads MLIRLLLLVICLAGPGVA.

The protein belongs to the FlgI family. The basal body constitutes a major portion of the flagellar organelle and consists of four rings (L,P,S, and M) mounted on a central rod.

It is found in the periplasm. The protein resides in the bacterial flagellum basal body. Functionally, assembles around the rod to form the L-ring and probably protects the motor/basal body from shearing forces during rotation. The sequence is that of Flagellar P-ring protein 2 from Cereibacter sphaeroides (strain ATCC 17023 / DSM 158 / JCM 6121 / CCUG 31486 / LMG 2827 / NBRC 12203 / NCIMB 8253 / ATH 2.4.1.) (Rhodobacter sphaeroides).